Consider the following 154-residue polypeptide: Ascorbate-specific PTS system EIIA component (154 aa).

Positions 6-150 (SLAENNSIRL…QEVLDLIDRT (145 aa)) constitute a PTS EIIA type-2 domain. The Tele-phosphohistidine intermediate role is filled by His68. His68 carries the phosphohistidine modification.

The protein resides in the cytoplasm. In terms of biological role, the phosphoenolpyruvate-dependent sugar phosphotransferase system (sugar PTS), a major carbohydrate active transport system, catalyzes the phosphorylation of incoming sugar substrates concomitantly with their translocation across the cell membrane. The enzyme II UlaABC PTS system is involved in ascorbate transport. This is Ascorbate-specific PTS system EIIA component (ulaC) from Salmonella typhi.